The sequence spans 583 residues: Radixin (583 aa).

Positions 5–295 (INVRVTTMDA…GNHELYMRRR (291 aa)) constitute an FERM domain. 60–63 (KLNK) contacts a 1,2-diacyl-sn-glycero-3-phospho-(1D-myo-inositol). Lys83 carries the post-translational modification N6-succinyllysine. Lys278 lines the a 1,2-diacyl-sn-glycero-3-phospho-(1D-myo-inositol) pocket. Disordered regions lie at residues 309 to 336 (AREEKHQKQLERAQLENEKKKREIAEKE), 374 to 407 (ELDQERKRAKEEAERLEKERQAAEEAKSALAKQA), and 460 to 526 (KEEL…RVKK). The segment covering 374–400 (ELDQERKRAKEEAERLEKERQAAEEAK) has biased composition (basic and acidic residues). Over residues 469 to 480 (APPPPPPPPVIP) the composition is skewed to pro residues. 2 stretches are compositionally biased toward basic and acidic residues: residues 483 to 492 (ENEHDEHDEN) and 506 to 525 (MNHRSEEERVTETQKNERVK). Thr564 is modified (phosphothreonine; by ROCK2).

In terms of assembly, interacts with CPNE1 (via VWFA domain) and CPNE4 (via VWFA domain). Binds NHERF1. Interacts with NHERF1, NHERF2, LAYN, MME/NEP and ICAM2. Interacts (via FERM domain) with SPN/CD43 cytoplasmic tail. Interacts with CD44. Interacts with CLIC5; may work together in a complex which also includes EZR and MYO6 to stabilize linkages between the plasma membrane and subjacent actin cytoskeleton at the base of stereocilia. In terms of processing, phosphorylated by tyrosine-protein kinases. Phosphorylation by ROCK2 suppresses the head-to-tail association of the N-terminal and C-terminal halves resulting in an opened conformation which is capable of actin and membrane-binding.

It localises to the cell membrane. The protein resides in the cytoplasm. Its subcellular location is the cytoskeleton. It is found in the cleavage furrow. The protein localises to the cell projection. It localises to the microvillus. The protein resides in the stereocilium. A head-to-tail association, of the N-terminal and C-terminal halves results in a closed conformation (inactive form) which is incapable of actin or membrane-binding. Its function is as follows. Probably plays a crucial role in the binding of the barbed end of actin filaments to the plasma membrane. The protein is Radixin (RDX) of Bos taurus (Bovine).